The chain runs to 329 residues: Calcium homeostasis modulator protein (329 aa).

At 1-14 (MTTSINSVVTVFQN) the chain is on the cytoplasmic side. A helical transmembrane segment spans residues 15-35 (VFTNHGSTLLNGILIATTVGG). At 36–53 (QSLVRKLTFSCPCAYPLN) the chain is on the extracellular side. The chain crosses the membrane as a helical span at residues 54–74 (IYHSLVFMFGPTAALLLIGIT). The Cytoplasmic portion of the chain corresponds to 75 to 103 (VNSTTWKLAHGFFFRVRDTRHSWKTTCVS). A helical membrane pass occupies residues 104 to 124 (WIEVLIQSSVAPIAWLFVVFL). Residues 125–191 (DGGYYRCYRS…DASYLEAESQ (67 aa)) are Extracellular-facing. The N-linked (GlcNAc...) asparagine glycan is linked to Asn-148. A helical transmembrane segment spans residues 192-212 (IYAWGLLLFSGVAAFLVITCN). Topologically, residues 213–329 (RMCDKYTLVQ…QIIVDETKED (117 aa)) are cytoplasmic.

This sequence belongs to the CALHM family. Expressed in head and body wall muscles, IL2, ASG, ASI, ASJ, PHA and PHB sensory neurons, and spermatheca.

The protein resides in the cell membrane. Functionally, pore-forming subunit of a voltage-gated ion channel. Permeable to monovalent cations, divalent cations and anions with selectivity Ca(2+) &gt; Mg(2+) &gt; Na(+) = K(+) &gt; Cl(-). Acts both as a voltage-gated and calcium-activated ion channel. Required for normal locomotion. In Caenorhabditis elegans, this protein is Calcium homeostasis modulator protein.